A 554-amino-acid polypeptide reads, in one-letter code: Polyamine aminopropyltransferase 2 (554 aa).

Positions 1-13 (MIEPHAPAPPGSP) are enriched in pro residues. A disordered region spans residues 1–20 (MIEPHAPAPPGSPPSWGGPC). Helical transmembrane passes span 37-57 (FLVLAGVFVCAACGLVYELEL), 69-89 (VTQASVVLSVMVFAMGLGSLA), 106-126 (AALALVGGSSAMLLYAVFAWT), 139-159 (ILLVAFSLAIGVLIGAEVPLL), 184-204 (VGALVGGLAFPFVLLPFLGQL), and 206-226 (GALLTGTVNAVVGAALVLGLF). The interval 235–516 (RWLLLTANAV…RTAPAPRLDP (282 aa)) is spermidine synthase. Residues 247–492 (ALLATATVLA…SVPGPRRAAA (246 aa)) form the PABS domain. Gln281 contacts S-methyl-5'-thioadenosine. 2 residues coordinate spermidine: His313 and Asp335. S-methyl-5'-thioadenosine-binding positions include Glu355 and 389 to 390 (DA). Asp408 functions as the Proton acceptor in the catalytic mechanism. The segment at 476 to 495 (DTGPGPGSVPGPRRAAAGPP) is disordered. The segment covering 485 to 495 (PGPRRAAAGPP) has biased composition (low complexity).

It belongs to the spermidine/spermine synthase family. In terms of assembly, homodimer or homotetramer.

It localises to the cell membrane. The enzyme catalyses S-adenosyl 3-(methylsulfanyl)propylamine + putrescine = S-methyl-5'-thioadenosine + spermidine + H(+). Its pathway is amine and polyamine biosynthesis; spermidine biosynthesis; spermidine from putrescine: step 1/1. Functionally, catalyzes the irreversible transfer of a propylamine group from the amino donor S-adenosylmethioninamine (decarboxy-AdoMet) to putrescine (1,4-diaminobutane) to yield spermidine. The chain is Polyamine aminopropyltransferase 2 from Streptomyces coelicolor (strain ATCC BAA-471 / A3(2) / M145).